Consider the following 457-residue polypeptide: NADH-quinone oxidoreductase subunit D (457 aa).

Residues 1–23 (MSTHTETPVDGSAETITGAQPYE) form a disordered region.

The protein belongs to the complex I 49 kDa subunit family. As to quaternary structure, NDH-1 is composed of 14 different subunits. Subunits NuoB, C, D, E, F, and G constitute the peripheral sector of the complex.

Its subcellular location is the cell membrane. The enzyme catalyses a quinone + NADH + 5 H(+)(in) = a quinol + NAD(+) + 4 H(+)(out). In terms of biological role, NDH-1 shuttles electrons from NADH, via FMN and iron-sulfur (Fe-S) centers, to quinones in the respiratory chain. The immediate electron acceptor for the enzyme in this species is believed to be a menaquinone. Couples the redox reaction to proton translocation (for every two electrons transferred, four hydrogen ions are translocated across the cytoplasmic membrane), and thus conserves the redox energy in a proton gradient. In Parafrankia sp. (strain EAN1pec), this protein is NADH-quinone oxidoreductase subunit D.